The following is a 335-amino-acid chain: Syntaxin-18 (335 aa).

Residues 1 to 309 lie on the Cytoplasmic side of the membrane; sequence MAVDITLLFR…EDIREAIKNN (309 aa). 2 stretches are compositionally biased toward basic and acidic residues: residues 168-182 and 192-208; these read KLEP…ESTS and KDSE…EKIL. Residues 168-226 form a disordered region; it reads KLEPEPNTKTRESTSSEKVSQSPSKDSEENPATEERPEKILAETQPELGTWGDGKGEDE. Residues 243-305 form the t-SNARE coiled-coil homology domain; sequence IGEMNSLFDE…KEGNEDIREA (63 aa). A helical; Anchor for type IV membrane protein membrane pass occupies residues 310-330; that stretch reads AGFRVWILFFLVMCSFSLLFL. At 331–335 the chain is on the vesicular side; it reads DWYDS.

It belongs to the syntaxin family. Component of a SNARE complex consisting of STX18, USE1L, BNIP1/SEC20L, and SEC22B. RINT1/TIP20L and ZW10 are associated with the complex through interaction with BNIP1/SEC20L. Interacts directly with USE1L and BNIP1/SEC20L. In terms of tissue distribution, ubiquitous.

Its subcellular location is the endoplasmic reticulum membrane. The protein resides in the golgi apparatus membrane. Functionally, syntaxin that may be involved in targeting and fusion of Golgi-derived retrograde transport vesicles with the ER. This Homo sapiens (Human) protein is Syntaxin-18 (STX18).